We begin with the raw amino-acid sequence, 86 residues long: Probable oxaloacetate decarboxylase gamma chain 1 (86 aa).

Residues 11–33 (AATLMVTGMAVVFLFLTLLVYLV) traverse the membrane as a helical segment.

Belongs to the OadG family. As to quaternary structure, heterotrimer of an alpha, a beta and a gamma subunit. Na(+) is required as a cofactor.

It localises to the cell membrane. The enzyme catalyses oxaloacetate + 2 Na(+)(in) + H(+) = pyruvate + 2 Na(+)(out) + CO2. In terms of biological role, catalyzes the decarboxylation of oxaloacetate coupled to Na(+) translocation. This is Probable oxaloacetate decarboxylase gamma chain 1 (oadG1) from Vibrio cholerae serotype O1 (strain ATCC 39315 / El Tor Inaba N16961).